The primary structure comprises 258 residues: Phosphate import ATP-binding protein PstB (258 aa).

The 242-residue stretch at Leu-12 to Ile-253 folds into the ABC transporter domain. An ATP-binding site is contributed by Gly-44–Ser-51.

It belongs to the ABC transporter superfamily. Phosphate importer (TC 3.A.1.7) family. In terms of assembly, the complex is composed of two ATP-binding proteins (PstB), two transmembrane proteins (PstC and PstA) and a solute-binding protein (PstS).

The protein resides in the cell inner membrane. It carries out the reaction phosphate(out) + ATP + H2O = ADP + 2 phosphate(in) + H(+). In terms of biological role, part of the ABC transporter complex PstSACB involved in phosphate import. Responsible for energy coupling to the transport system. The polypeptide is Phosphate import ATP-binding protein PstB (Bordetella parapertussis (strain 12822 / ATCC BAA-587 / NCTC 13253)).